The primary structure comprises 784 residues: Kinesin-like protein Klp68D (784 aa).

The region spanning 19-344 (CVQVVVRCRP…LRYASRAKSI (326 aa)) is the Kinesin motor domain. ATP is bound at residue 106 to 113 (GQTGTGKT). Residues 351-385 (NEDPQDAKLKEYQEEIERLKRLIGPQQQQRSEKQV) are a coiled coil. Disordered stretches follow at residues 371–449 (RLIG…ERER), 605–652 (KFSS…PSSL), and 742–784 (IKSS…LVNK). The span at 386–396 (TAKKQRVKKPK) shows a compositional bias: basic residues. A compositionally biased stretch (acidic residues) spans 416 to 428 (PVEDDSDPEGAES). Residues 426–582 (AESESDKENE…KRQLLIIDNF (157 aa)) are a coiled coil. The segment covering 429–449 (ESDKENEAEVAKSNEELERER) has biased composition (basic and acidic residues). Residues 622–634 (SSKRPVSHPQRRR) show a composition bias toward basic residues. Over residues 769–778 (KKPASAYPKA) the composition is skewed to low complexity.

The protein belongs to the TRAFAC class myosin-kinesin ATPase superfamily. Kinesin family. Kinesin II subfamily. In terms of tissue distribution, expressed primarily in the central nervous system and in a subset of the peripheral nervous system during embryogenesis.

The protein resides in the cytoplasm. It is found in the cytoskeleton. Plus-end directed microtubule motor that may be used for anterograde axonal transport and could conceivably move cargos in fly neurons different than those moved by kinesin heavy chain or other plus-end directed motors. The protein is Kinesin-like protein Klp68D (Klp68D) of Drosophila melanogaster (Fruit fly).